The sequence spans 721 residues: Probable acyl-activating enzyme 17, peroxisomal (721 aa).

The Microbody targeting signal signature appears at 719–721 (SKL).

This sequence belongs to the ATP-dependent AMP-binding enzyme family. As to expression, expressed in leaves, stems and developing seeds.

It is found in the peroxisome. Its function is as follows. May act as an acid--thiol ligase that activates carboxylic acids by forming acyl-CoAs. The protein is Probable acyl-activating enzyme 17, peroxisomal (AAE17) of Arabidopsis thaliana (Mouse-ear cress).